Consider the following 758-residue polypeptide: Vitamin K-dependent gamma-carboxylase (758 aa).

Positions 1–22 (MAVSAGSARTSPSSDKVQKDKA) are disordered. At A2 the chain carries N-acetylalanine. Topologically, residues 2–60 (AVSAGSARTSPSSDKVQKDKAELISGPRQDSRIGKLLGFEWTDLSSWRRLVTLLNRPTD) are cytoplasmic. Residues 61–81 (PASLAVFRFLFGFLMVLDIPQ) traverse the membrane as a helical segment. Residues 82 to 113 (ERGLSSLDRKYLDGLDVCRFPLLDALRPLPLD) lie on the Lumenal side of the membrane. C99 and C450 form a disulfide bridge. A helical transmembrane segment spans residues 114 to 134 (WMYLVYTIMFLGALGMMLGLC). The Cytoplasmic segment spans residues 135–136 (YR). A helical membrane pass occupies residues 137–157 (ISCVLFLLPYWYVFLLDKTSW). Over 158–292 (NNHSYLYGLL…VSYFHCMNSQ (135 aa)) the chain is Lumenal. K218 (proton acceptor) is an active-site residue. The chain crosses the membrane as a helical span at residues 293–313 (LFSIGMFSYVMLASSPLFCSP). The Cytoplasmic portion of the chain corresponds to 314–361 (EWPRKLVSYCPRRLQQLLPLKAAPQPSVSCVYKRSRGKSGQKPGLRHQ). The chain crosses the membrane as a helical span at residues 362–382 (LGAAFTLLYLLEQLFLPYSHF). Over 383 to 758 (LTQGYNNWTN…SNPDPVHSEF (376 aa)) the chain is Lumenal. Residues N459 and N550 are each glycosylated (N-linked (GlcNAc...) asparagine). The disordered stretch occupies residues 732-758 (GELNPSNTDSSHSNPPESNPDPVHSEF). Residues 735-747 (NPSNTDSSHSNPP) show a composition bias toward polar residues.

It belongs to the vitamin K-dependent gamma-carboxylase family. In terms of assembly, monomer. May interact with CALU.

The protein localises to the endoplasmic reticulum membrane. The enzyme catalyses 4-carboxy-L-glutamyl-[protein] + 2,3-epoxyphylloquinone + H2O + H(+) = phylloquinol + L-glutamyl-[protein] + CO2 + O2. In terms of biological role, mediates the vitamin K-dependent carboxylation of glutamate residues to calcium-binding gamma-carboxyglutamate (Gla) residues with the concomitant conversion of the reduced hydroquinone form of vitamin K to vitamin K epoxide. Catalyzes gamma-carboxylation of various proteins, such as blood coagulation factors (F2, F7, F9 and F10), osteocalcin (BGLAP) or matrix Gla protein (MGP). This is Vitamin K-dependent gamma-carboxylase (GGCX) from Homo sapiens (Human).